A 559-amino-acid chain; its full sequence is Cytokine-like nuclear factor N-PAC (559 aa).

The PWWP domain maps to 9–70 (VNDLVWAKMK…ETQIKPYQEF (62 aa)). A disordered region spans residues 106 to 137 (SEQDNRPDPDVEFNKLREGGTESGEETTVNNT). Basic and acidic residues predominate over residues 108 to 125 (QDNRPDPDVEFNKLREGG). The dehydrogenase domain stretch occupies residues 267 to 559 (RNIQASNLKF…SSAVYVRARF (293 aa)). NAD(+)-binding positions include 277–291 (GFLG…MVKN) and Lys-511.

This sequence belongs to the HIBADH-related family. NP60 subfamily. Binds to mononucleosomes.

It is found in the chromosome. Nucleosome-destabilizing factor that is recruited to genes during transcriptional activation and colocalizes with a subset of trimethylated 'Lys-36' histone H3 (H3K36me3)-enriched regions. This is Cytokine-like nuclear factor N-PAC from Aedes aegypti (Yellowfever mosquito).